The chain runs to 582 residues: Type I secretion system ATP-binding protein PrsD (582 aa).

The next 3 helical transmembrane spans lie at 22-42, 59-79, and 148-168; these read FIGV…GSFF, LIAL…FELI, and IAIC…GGLI. The region spanning 22–301 is the ABC transmembrane type-1 domain; that stretch reads FIGVGVASAL…AIGNWRGLVA (280 aa). Residues 332-568 form the ABC transporter domain; that stretch reads LTVEGLASGP…VLRPQQVERQ (237 aa). 366-373 is an ATP binding site; the sequence is GPSASGKS.

This sequence belongs to the ABC transporter superfamily. In terms of assembly, part of a type I secretion system composed of PrsD and PrsE.

It localises to the cell inner membrane. Functionally, mediates secretion of glycanase ExsH. The chain is Type I secretion system ATP-binding protein PrsD (prsD) from Rhizobium meliloti (strain 1021) (Ensifer meliloti).